Reading from the N-terminus, the 627-residue chain is ATP-dependent zinc metalloprotease FtsH 2 (627 aa).

Residues Met1–Thr7 lie on the Cytoplasmic side of the membrane. A helical transmembrane segment spans residues Ala8–Gly28. The Lumenal portion of the chain corresponds to Gly29 to Val117. Residues Trp118–Phe138 form a helical membrane-spanning segment. At Arg139–Leu627 the chain is on the cytoplasmic side. An ATP-binding site is contributed by Gly212 to Thr219. His433 serves as a coordination point for Zn(2+). Glu434 is a catalytic residue. Zn(2+) contacts are provided by His437 and Asp511.

This sequence in the central section; belongs to the AAA ATPase family. It in the C-terminal section; belongs to the peptidase M41 family. As to quaternary structure, homohexamer (Potential). Part of a large (&gt;500 kDa) complex that includes FtsH3 and PSII. Coimmunoprecipitates with YidC. The cofactor is Zn(2+).

Its subcellular location is the cellular thylakoid membrane. In terms of biological role, acts as a processive, ATP-dependent zinc metallopeptidase for both cytoplasmic and membrane proteins. Plays a role in the quality control of integral membrane proteins. Plays a role in the selective replacement of photosystem II (PSII) protein D1 in the PSII repair cycle following visible-light and UV-B induced damage. If damaged D1 is not removed then new D1 cannot be inserted to restore the PSII reaction center. Seems to also degrade damaged and/or unassembled PSII proteins D2 and PsbB (CP47). May recognize D1 via its first 20 amino acids, as deletion of these prevents the PSII repair cycle. Also seems to degrade cytoplasmic GGPS, glucosylglycerol-phosphate synthase. This chain is ATP-dependent zinc metalloprotease FtsH 2 (ftsH2), found in Synechocystis sp. (strain ATCC 27184 / PCC 6803 / Kazusa).